The primary structure comprises 330 residues: Phenylalanine--tRNA ligase alpha subunit (330 aa).

Glu-255 provides a ligand contact to Mg(2+).

Belongs to the class-II aminoacyl-tRNA synthetase family. Phe-tRNA synthetase alpha subunit type 1 subfamily. Tetramer of two alpha and two beta subunits. Mg(2+) serves as cofactor.

Its subcellular location is the cytoplasm. It carries out the reaction tRNA(Phe) + L-phenylalanine + ATP = L-phenylalanyl-tRNA(Phe) + AMP + diphosphate + H(+). The polypeptide is Phenylalanine--tRNA ligase alpha subunit (Acinetobacter baumannii (strain SDF)).